Consider the following 456-residue polypeptide: Cysteine--tRNA ligase (456 aa).

Cysteine 28 contributes to the Zn(2+) binding site. Residues 30 to 40 (ITVYDHCHLGH) carry the 'HIGH' region motif. The Zn(2+) site is built by cysteine 209, histidine 234, and glutamate 238. Positions 266 to 270 (KMAKS) match the 'KMSKS' region motif. Lysine 269 serves as a coordination point for ATP.

This sequence belongs to the class-I aminoacyl-tRNA synthetase family. In terms of assembly, monomer. Requires Zn(2+) as cofactor.

The protein resides in the cytoplasm. It carries out the reaction tRNA(Cys) + L-cysteine + ATP = L-cysteinyl-tRNA(Cys) + AMP + diphosphate. In Legionella pneumophila subsp. pneumophila (strain Philadelphia 1 / ATCC 33152 / DSM 7513), this protein is Cysteine--tRNA ligase.